We begin with the raw amino-acid sequence, 382 residues long: Protein NASP homolog 1 (382 aa).

The disordered stretch occupies residues 1–39 (MDTENIADASDIRVKDASGDSDEKGNGTTTEEETVEQKE). A compositionally biased stretch (basic and acidic residues) spans 10 to 25 (SDIRVKDASGDSDEKG). One copy of the TPR 1 repeat lies at 42–75 (LAELLAAGRRALKVNDIDKASDSLSEATELSSEI). A compositionally biased stretch (basic and acidic residues) spans 103 to 112 (QLLKGPGEKE). A disordered region spans residues 103–151 (QLLKGPGEKESGDEEQAGNSDDKTDEENGETEKEDGEESGEEEDDDDDT). The span at 125-150 (KTDEENGETEKEDGEESGEEEDDDDD) shows a compositional bias: acidic residues. 2 TPR repeats span residues 191–224 (ADVL…QRNV) and 233–266 (AQTY…LIAR). Residues 264-304 (IARQTELKHELERGVDDKEKKSEFENELKELEEMMPGVEEM) adopt a coiled-coil conformation. The interval 337 to 382 (PQEAGDQKEANDISSLVRRPAKRAVDAPTDNQAVKKEKEEEGTTSI) is disordered. Over residues 369 to 382 (AVKKEKEEEGTTSI) the composition is skewed to basic and acidic residues.

It belongs to the NASP family. As to quaternary structure, may interact with zinc finger protein tra-4 and histone deacetylase hda-1.

The protein resides in the nucleus. Functionally, promotes normal hermaphrodite (XX) development, in concert with zinc finger protein tra-4 and histone deacetylase hda-1, perhaps as components of a complex. May act redundantly with nasp-2. Involved in innate immune response to B.thuringiensis strain DB27 and S.aureus bacteria. May play a role in the uptake or spreading of dsRNA. This Caenorhabditis elegans protein is Protein NASP homolog 1.